The primary structure comprises 176 residues: MKPLVMLICFGVILLQLGVTKVCQHNEVQLGNECCPPCGLGQRVTKVCTERTSVTCTPCPNGTYVSGLYNCTDCTQCNVTQVMIRNCTSTNNTVCAPKNHTYFSTPGVQHHKQRQQNHTAHITVKQGKSGRHTLAWLSLFIFLVGIILLILYLIAAYRSERCQQCCSIGKIFYRTL.

A signal peptide spans 1–20 (MKPLVMLICFGVILLQLGVT). Residues 58 to 95 (PCPNGTYVSGLYNCTDCTQCNVTQVMIRNCTSTNNTVC) form a TNFR-Cys repeat. Intrachain disulfides connect Cys59–Cys71, Cys74–Cys87, and Cys77–Cys95. Residues 134–154 (LAWLSLFIFLVGIILLILYLI) traverse the membrane as a helical segment.

Interacts with host TRIM23; this interaction causes auto-ubiquitination of TRAF6, leading to NF-kappaB activation.

It is found in the membrane. Activates NF-kappa-B in a tumor necrosis factor receptor (TNFR)-associated factor 6 (TRAF6)-dependent manner, causing the up-regulation of the chemokine CCL22. The protein is Membrane glycoprotein UL144 (UL144) of Human cytomegalovirus (strain Merlin) (HHV-5).